The chain runs to 217 residues: Outer-membrane lipoprotein LolB (217 aa).

An N-terminal signal peptide occupies residues 1 to 20 (MSKTVRTLALGGLVLAGLSA). Cys21 carries the N-palmitoyl cysteine lipid modification. Cys21 is lipidated: S-diacylglycerol cysteine. The tract at residues 105 to 124 (DTTSGAGRLEGLEGGPRSGP) is disordered.

Belongs to the LolB family. In terms of assembly, monomer.

Its subcellular location is the cell outer membrane. Plays a critical role in the incorporation of lipoproteins in the outer membrane after they are released by the LolA protein. The chain is Outer-membrane lipoprotein LolB from Xanthomonas axonopodis pv. citri (strain 306).